A 426-amino-acid polypeptide reads, in one-letter code: D-tagatose-1,6-bisphosphate aldolase subunit KbaZ (426 aa).

The protein belongs to the GatZ/KbaZ family. KbaZ subfamily. In terms of assembly, forms a complex with KbaY.

Its pathway is carbohydrate metabolism; D-tagatose 6-phosphate degradation; D-glyceraldehyde 3-phosphate and glycerone phosphate from D-tagatose 6-phosphate: step 2/2. Component of the tagatose-1,6-bisphosphate aldolase KbaYZ that is required for full activity and stability of the Y subunit. Could have a chaperone-like function for the proper and stable folding of KbaY. When expressed alone, KbaZ does not show any aldolase activity. This chain is D-tagatose-1,6-bisphosphate aldolase subunit KbaZ, found in Escherichia coli (strain ATCC 8739 / DSM 1576 / NBRC 3972 / NCIMB 8545 / WDCM 00012 / Crooks).